Consider the following 89-residue polypeptide: Small ribosomal subunit protein uS17 (89 aa).

It belongs to the universal ribosomal protein uS17 family. In terms of assembly, part of the 30S ribosomal subunit.

Its function is as follows. One of the primary rRNA binding proteins, it binds specifically to the 5'-end of 16S ribosomal RNA. This is Small ribosomal subunit protein uS17 from Variovorax paradoxus (strain S110).